Consider the following 434-residue polypeptide: Enolase (434 aa).

Residue Gln163 coordinates (2R)-2-phosphoglycerate. Glu205 serves as the catalytic Proton donor. The Mg(2+) site is built by Asp242, Glu291, and Asp318. Lys343, Arg372, Ser373, and Lys394 together coordinate (2R)-2-phosphoglycerate. Lys343 acts as the Proton acceptor in catalysis.

The protein belongs to the enolase family. Requires Mg(2+) as cofactor.

The protein resides in the cytoplasm. The protein localises to the secreted. It localises to the cell surface. The catalysed reaction is (2R)-2-phosphoglycerate = phosphoenolpyruvate + H2O. The protein operates within carbohydrate degradation; glycolysis; pyruvate from D-glyceraldehyde 3-phosphate: step 4/5. Catalyzes the reversible conversion of 2-phosphoglycerate (2-PG) into phosphoenolpyruvate (PEP). It is essential for the degradation of carbohydrates via glycolysis. This Streptococcus gordonii (strain Challis / ATCC 35105 / BCRC 15272 / CH1 / DL1 / V288) protein is Enolase.